Here is a 177-residue protein sequence, read N- to C-terminus: Protein C2-DOMAIN ABA-RELATED 4 (177 aa).

Residues Ala4–Ser118 form the C2 domain. Residues Arg33, Asp34, Asp39, Asp85, His86, Asp87, and Asp93 each coordinate Ca(2+).

It belongs to the plant CAR protein family. In terms of assembly, dimers and oligomers. Binds to PYR/PYL/RCAR abscisic acid intracellular receptors in an ABA-independent manner, both at the plasma membrane and in the nucleus. Interacts directly with PYR1, PYL1, PYL4, PYL6 and PYL8. Binds phospholipids in a Ca(2+)-dependent manner. Interacts with YchF1. Ca(2+) is required as a cofactor.

It localises to the cell membrane. It is found in the nucleus. The protein resides in the cytoplasm. Its subcellular location is the cytosol. In terms of biological role, mediates the transient calcium-dependent interaction of PYR/PYL/RCAR abscisic acid (ABA) receptors with the plasma membrane and thus regulates ABA sensitivity. Stimulates the GTPase/ATPase activities of YchF1, and regulates its subcellular localization. Promotes tolerance towards salinity stress by limiting the accumulation of reactive oxygen species (ROS). Promotes resistance to bacterial pathogens (e.g. Xanthomonas oryzae pv. oryzae and P.syringae pv. tomato DC3000). Binds liposomes in the absence of exogenous Ca(2+), but this activity is enhanced in the presence of Ca(2+) and generates membrane curvature. This is Protein C2-DOMAIN ABA-RELATED 4 from Arabidopsis thaliana (Mouse-ear cress).